The following is a 370-amino-acid chain: Developmentally-regulated GTP-binding protein 1 homolog (370 aa).

Residues 65 to 292 (ARVGLIGFPS…LLDKIWEYLK (228 aa)) form the OBG-type G domain. GTP-binding positions include 71 to 78 (GFPSVGKS), 117 to 121 (DLPGI), and 250 to 253 (NKID). Residues 292 to 369 (KLIRVYTKPK…ADEDIVQIVK (78 aa)) form the TGS domain.

The protein belongs to the TRAFAC class OBG-HflX-like GTPase superfamily. OBG GTPase family.

The protein is Developmentally-regulated GTP-binding protein 1 homolog (drg1) of Dictyostelium discoideum (Social amoeba).